The chain runs to 102 residues: Small ribosomal subunit protein uS17 (102 aa).

Over residues 1 to 15 the composition is skewed to polar residues; the sequence is MTDETASQEASQSTD. The interval 1–20 is disordered; sequence MTDETASQEASQSTDAAAPA.

Belongs to the universal ribosomal protein uS17 family. As to quaternary structure, part of the 30S ribosomal subunit.

Its function is as follows. One of the primary rRNA binding proteins, it binds specifically to the 5'-end of 16S ribosomal RNA. In Frankia casuarinae (strain DSM 45818 / CECT 9043 / HFP020203 / CcI3), this protein is Small ribosomal subunit protein uS17.